A 444-amino-acid chain; its full sequence is MKHFEANFDGLVGPTHNYAGLSFGNVASQSNAAQVSNPKDAAKQGLKKAKALADMGMVQGMLAPQERPDIHTLRRVGFTGSDADVLSQAAKASPVLLQACASASSMWTANAATVSPSADSDDGKLHFTPANLVDKLHRSIEPVTTGNILKAIFTDERYFAHHQHLPEHPHFGDEGAANHTRLCHDYGQAGVEVFVYGRSVADLSRPAPVKYPARQTLEASQAVARLHQLSDDRTVYMQQNPDVIDQGVFHNDVIAVGNQNVLFYHEQAFLETQAKLAEIDKKMHGNMYFIEVPTAKVSVQDAVKSYLFNTQIITLSDGNMAIIAPTDCQENPAVHAYLNELVTLNTPIKAVHYFDVKQSMQNGGGPACLRLRVAMNETELAAVNPQVMMNDALFARLNQWVDKHYRDRLSTQDLADPQLLMESRTALDELTQIMKLGSVYQFQR.

Substrate contacts are provided by residues 19 to 28 (AGLSFGNVAS), Asn110, and 137 to 138 (HR). Residue Glu174 is part of the active site. Arg214 is a binding site for substrate. Residue His250 is part of the active site. Substrate-binding residues include Asp252 and Asn362. Residue Cys368 is the Nucleophile of the active site.

It belongs to the succinylarginine dihydrolase family. Homodimer.

The catalysed reaction is N(2)-succinyl-L-arginine + 2 H2O + 2 H(+) = N(2)-succinyl-L-ornithine + 2 NH4(+) + CO2. The protein operates within amino-acid degradation; L-arginine degradation via AST pathway; L-glutamate and succinate from L-arginine: step 2/5. Catalyzes the hydrolysis of N(2)-succinylarginine into N(2)-succinylornithine, ammonia and CO(2). This Shewanella amazonensis (strain ATCC BAA-1098 / SB2B) protein is N-succinylarginine dihydrolase.